The primary structure comprises 491 residues: Fibrinogen beta chain (491 aa).

Positions 1 to 30 (MKRMVSWSFHKLKTMKHLLLLLLCVFLVKS) are cleaved as a signal peptide. Glutamine 31 bears the Pyrrolidone carboxylic acid mark. The interval 44–75 (RGHRPLDKKREEAPSLRPAPPPISGGGYRARP) is disordered. The beta-chain polymerization, binding distal domain of another fibrin stretch occupies residues 45 to 47 (GHR). Residues 47-57 (RPLDKKREEAP) are compositionally biased toward basic and acidic residues. Positions 157-222 (KRQKQVKDNE…ESDVSAQMEY (66 aa)) form a coiled coil. 2 cysteine pairs are disulfide-bonded: cysteine 231/cysteine 316 and cysteine 241/cysteine 270. The Fibrinogen C-terminal domain occupies 232 to 488 (NIPVVSGKEC…KMSMKIRPFF (257 aa)). An N-linked (GlcNAc...) asparagine glycan is attached at asparagine 394. A disulfide bridge links cysteine 424 with cysteine 437.

As to quaternary structure, heterohexamer; disulfide linked. Contains 2 sets of 3 non-identical chains (alpha, beta and gamma). The 2 heterotrimers are in head to head conformation with the N-termini in a small central domain. In terms of processing, conversion of fibrinogen to fibrin is triggered by thrombin, which cleaves fibrinopeptides A and B from alpha and beta chains, and thus exposes the N-terminal polymerization sites responsible for the formation of the soft clot. The soft clot is converted into the hard clot by factor XIIIA which catalyzes the epsilon-(gamma-glutamyl)lysine cross-linking between gamma chains (stronger) and between alpha chains (weaker) of different monomers. Detected in blood plasma (at protein level).

The protein localises to the secreted. In terms of biological role, cleaved by the protease thrombin to yield monomers which, together with fibrinogen alpha (FGA) and fibrinogen gamma (FGG), polymerize to form an insoluble fibrin matrix. Fibrin has a major function in hemostasis as one of the primary components of blood clots. In addition, functions during the early stages of wound repair to stabilize the lesion and guide cell migration during re-epithelialization. Was originally thought to be essential for platelet aggregation, based on in vitro studies using anticoagulated blood. However subsequent studies have shown that it is not absolutely required for thrombus formation in vivo. Enhances expression of SELP in activated platelets. Maternal fibrinogen is essential for successful pregnancy. Fibrin deposition is also associated with infection, where it protects against IFNG-mediated hemorrhage. May also facilitate the antibacterial immune response via both innate and T-cell mediated pathways. The chain is Fibrinogen beta chain (FGB) from Homo sapiens (Human).